We begin with the raw amino-acid sequence, 212 residues long: Large ribosomal subunit protein uL3 (212 aa).

Polar residues predominate over residues 140–155 (SVSHRAIGSTGQNQSP). Residues 140–166 (SVSHRAIGSTGQNQSPGKVFKGKKMPG) form a disordered region. Position 153 is an N5-methylglutamine (Gln-153).

The protein belongs to the universal ribosomal protein uL3 family. Part of the 50S ribosomal subunit. Forms a cluster with proteins L14 and L19. In terms of processing, methylated by PrmB.

One of the primary rRNA binding proteins, it binds directly near the 3'-end of the 23S rRNA, where it nucleates assembly of the 50S subunit. The polypeptide is Large ribosomal subunit protein uL3 (Psychrobacter cryohalolentis (strain ATCC BAA-1226 / DSM 17306 / VKM B-2378 / K5)).